The following is an 859-amino-acid chain: Ubiquitin carboxyl-terminal hydrolase 23 (859 aa).

The span at 1–24 (MEVATSSTEITIQTDRDPSSNNNG) shows a compositional bias: polar residues. Residues 1-26 (MEVATSSTEITIQTDRDPSSNNNGSC) form a disordered region. Positions 107 to 410 (AGLQNLGNTC…KAYMLFYVRD (304 aa)) constitute a USP domain. Catalysis depends on cysteine 116, which acts as the Nucleophile. Histidine 369 serves as the catalytic Proton acceptor. Disordered regions lie at residues 722 to 749 (MISS…ASQN) and 822 to 859 (EESY…AYRI).

Belongs to the peptidase C19 family.

It catalyses the reaction Thiol-dependent hydrolysis of ester, thioester, amide, peptide and isopeptide bonds formed by the C-terminal Gly of ubiquitin (a 76-residue protein attached to proteins as an intracellular targeting signal).. Recognizes and hydrolyzes the peptide bond at the C-terminal Gly of ubiquitin. Involved in the processing of poly-ubiquitin precursors as well as that of ubiquitinated proteins. This chain is Ubiquitin carboxyl-terminal hydrolase 23 (UBP23), found in Arabidopsis thaliana (Mouse-ear cress).